The following is a 379-amino-acid chain: Alcohol dehydrogenase class-3 (379 aa).

Zn(2+) contacts are provided by cysteine 47, histidine 69, cysteine 99, cysteine 102, cysteine 105, cysteine 113, and cysteine 176.

It belongs to the zinc-containing alcohol dehydrogenase family. Class-III subfamily. In terms of assembly, homodimer. Zn(2+) serves as cofactor.

The protein resides in the cytoplasm. The catalysed reaction is a primary alcohol + NAD(+) = an aldehyde + NADH + H(+). It carries out the reaction a secondary alcohol + NAD(+) = a ketone + NADH + H(+). It catalyses the reaction S-(hydroxymethyl)glutathione + NADP(+) = S-formylglutathione + NADPH + H(+). The enzyme catalyses S-(hydroxymethyl)glutathione + NAD(+) = S-formylglutathione + NADH + H(+). In terms of biological role, class-III ADH is remarkably ineffective in oxidizing ethanol, but it readily catalyzes the oxidation of long-chain primary alcohols and the oxidation of S-(hydroxymethyl) glutathione. This chain is Alcohol dehydrogenase class-3 (adh5), found in Dictyostelium discoideum (Social amoeba).